The chain runs to 34 residues: Unknown protein 5 (34 aa).

The protein is Unknown protein 5 of Pseudotsuga menziesii (Douglas-fir).